The chain runs to 354 residues: Putative [LysW]-L-2-aminoadipate/[LysW]-L-glutamate phosphate reductase (354 aa).

NADP(+)-binding positions include 10-13 (SGVI) and 34-36 (SRR). Residue Cys-153 is part of the active site. Residue Asn-321 coordinates NADP(+).

This sequence belongs to the NAGSA dehydrogenase family. Type 1 subfamily. LysY sub-subfamily.

It is found in the cytoplasm. The catalysed reaction is [amino-group carrier protein]-C-terminal-N-(1-carboxy-5-oxopentan-1-yl)-L-glutamine + phosphate + NADP(+) = [amino-group carrier protein]-C-terminal-N-(1-carboxy-5-phosphooxy-5-oxopentan-1-yl)-L-glutamine + NADPH + H(+). It catalyses the reaction [amino-group carrier protein]-C-terminal-gamma-(L-glutamyl-5-semialdehyde)-L-glutamate + phosphate + NADP(+) = [amino-group carrier protein]-C-terminal-gamma-(5-phospho-L-glutamyl)-L-glutamate + NADPH + H(+). It functions in the pathway amino-acid biosynthesis; L-lysine biosynthesis via AAA pathway; L-lysine from L-alpha-aminoadipate (Thermus route): step 3/5. It participates in amino-acid biosynthesis; L-arginine biosynthesis. Functionally, involved in both the arginine and lysine biosynthetic pathways. The polypeptide is Putative [LysW]-L-2-aminoadipate/[LysW]-L-glutamate phosphate reductase (Caldivirga maquilingensis (strain ATCC 700844 / DSM 13496 / JCM 10307 / IC-167)).